A 166-amino-acid polypeptide reads, in one-letter code: UPF0304 protein PBPRA2768 (166 aa).

Belongs to the UPF0304 family.

The protein is UPF0304 protein PBPRA2768 of Photobacterium profundum (strain SS9).